A 213-amino-acid chain; its full sequence is Protein GrpE (213 aa).

A compositionally biased stretch (basic and acidic residues) spans 1–23; it reads MSDEKKPEAETSESLQKREEKLA. A disordered region spans residues 1 to 43; the sequence is MSDEKKPEAETSESLQKREEKLAETLASEPAAQGEAEDAAAAG. Over residues 29–43 the composition is skewed to low complexity; the sequence is EPAAQGEAEDAAAAG.

Belongs to the GrpE family. As to quaternary structure, homodimer.

The protein localises to the cytoplasm. Participates actively in the response to hyperosmotic and heat shock by preventing the aggregation of stress-denatured proteins, in association with DnaK and GrpE. It is the nucleotide exchange factor for DnaK and may function as a thermosensor. Unfolded proteins bind initially to DnaJ; upon interaction with the DnaJ-bound protein, DnaK hydrolyzes its bound ATP, resulting in the formation of a stable complex. GrpE releases ADP from DnaK; ATP binding to DnaK triggers the release of the substrate protein, thus completing the reaction cycle. Several rounds of ATP-dependent interactions between DnaJ, DnaK and GrpE are required for fully efficient folding. This Parvibaculum lavamentivorans (strain DS-1 / DSM 13023 / NCIMB 13966) protein is Protein GrpE.